A 187-amino-acid polypeptide reads, in one-letter code: MIITIKFESKEKLVSMKQYITVVGVSVNQEGTFSWRPGTFYMKIHEESAAGPFAKGAEISDLSNSSAIGCGISINQEGGDGSIRVKESSLRKKQERMSTKYPTTMSCREAFDQLTSCYSIGGQFRSYYRYGDFTSCDKQVSKFKFCIIHGNDPVKVQEWYKDQVSNNKALENTSGVIWQERETTANK.

This sequence belongs to the EMI1 family.

Its function is as follows. Involved in sporulation. Required for the full activation of the early meiotic inducer IME1. This Saccharomyces cerevisiae (strain ATCC 204508 / S288c) (Baker's yeast) protein is Early meiotic induction protein 1 (EMI1).